Consider the following 163-residue polypeptide: MALNLQDKQAIVAEVNEAAKGALSAVIADSRGVTVDKMTELRKTAREAGVSMRVVRNTLLRRAVEGTEFECLTDTFTGPTLIAFSNEHPGAAARLFKEFAKANDKFEIKGAAFEGKIQDVDFLATLPTYDEAIARLMGTIKEAAAGKLVRTFAALRDKLQEAA.

It belongs to the universal ribosomal protein uL10 family. As to quaternary structure, part of the ribosomal stalk of the 50S ribosomal subunit. The N-terminus interacts with L11 and the large rRNA to form the base of the stalk. The C-terminus forms an elongated spine to which L12 dimers bind in a sequential fashion forming a multimeric L10(L12)X complex.

Its function is as follows. Forms part of the ribosomal stalk, playing a central role in the interaction of the ribosome with GTP-bound translation factors. This Mannheimia succiniciproducens (strain KCTC 0769BP / MBEL55E) protein is Large ribosomal subunit protein uL10.